A 981-amino-acid polypeptide reads, in one-letter code: Anoctamin-3 (981 aa).

Residues 1–22 show a composition bias toward polar residues; the sequence is MVHHSGSIQSFKQQKGMNISKS. A disordered region spans residues 1–33; it reads MVHHSGSIQSFKQQKGMNISKSEITKETSLKPS. The Cytoplasmic segment spans residues 1–403; it reads MVHHSGSIQS…LYFAWLGWYT (403 aa). Residues 404–424 traverse the membrane as a helical segment; sequence GMLIPAAIVGLCVFFYGLFTM. 3 N-linked (GlcNAc...) asparagine glycosylation sites follow: N425, N448, and N455. The Extracellular portion of the chain corresponds to 425 to 469; it reads NNSQVSQEICKATEVFMCPLCDKNCSLQRLNDSCIYAKVTYLFDN. Residues 470–490 traverse the membrane as a helical segment; the sequence is GGTVFFAIFMAIWATVFLEFW. Topologically, residues 491 to 550 are cytoplasmic; the sequence is KRRRSILTYTWDLIEWEEEEETLRPQFEAKYYKMEIVNPITGKPEPHQPSSDKVTRLLVS. A helical membrane pass occupies residues 551–571; that stretch reads VSGIFFMISLVITAVFGVVVY. Residues 572-592 lie on the Extracellular side of the membrane; the sequence is RLVVMEQFASFKWNFIKQYWQ. Residues 593 to 613 traverse the membrane as a helical segment; that stretch reads FATSAAAVCINFIIIMLLNLA. The Cytoplasmic segment spans residues 614 to 640; the sequence is YEKIAYLLTNLEYPRTESEWENSFALK. A helical membrane pass occupies residues 641–661; the sequence is MFLFQFVNLNSSIFYIAFFLG. The Extracellular segment spans residues 662–761; sequence RFVGHPGKYN…MDEYLEMVLQ (100 aa). A helical membrane pass occupies residues 762 to 782; it reads FGFTTIFVAAFPLAPLLALLN. Topologically, residues 783-810 are cytoplasmic; that stretch reads NIIEIRLDAYKFVTQWRRPLPARATDIG. Residues 811–831 form a helical membrane-spanning segment; the sequence is IWLGILEGIGILAVITNAFVI. The Extracellular segment spans residues 832–914; sequence AITSDYIPRF…QYWHILAARL (83 aa). A glycan (N-linked (GlcNAc...) asparagine) is linked at N866. Residues 915-935 traverse the membrane as a helical segment; sequence AFIIVFEHLVFGIKSFIAYLI. At 936 to 981 the chain is on the cytoplasmic side; the sequence is PDVPKGLHDRIRREKYLVQEMMYEAELEHLQQQRRKSGQPVHHEWP.

Belongs to the anoctamin family. In terms of assembly, interacts with KCNT1/Slack. In terms of tissue distribution, highly expressed in the forebrain striatum.

Its subcellular location is the cell membrane. It carries out the reaction a 1,2-diacyl-sn-glycero-3-phosphocholine(in) = a 1,2-diacyl-sn-glycero-3-phosphocholine(out). The catalysed reaction is a beta-D-galactosyl-(1&lt;-&gt;1')-N-acylsphing-4-enine(out) = a beta-D-galactosyl-(1&lt;-&gt;1')-N-acylsphing-4-enine(in). Its function is as follows. Has calcium-dependent phospholipid scramblase activity; scrambles phosphatidylcholine and galactosylceramide. Seems to act as potassium channel regulator and may inhibit pain signaling; can facilitate KCNT1/Slack channel activity by promoting its full single-channel conductance at very low sodium concentrations and by increasing its sodium sensitivity. Does not exhibit calcium-activated chloride channel (CaCC) activity. The sequence is that of Anoctamin-3 (ANO3) from Homo sapiens (Human).